Consider the following 310-residue polypeptide: Formyltetrahydrofolate deformylase (310 aa).

Residues 1 to 30 (MGKGSMTAHATPNEPDYPPPPGGPPPPADI) are disordered. The span at 15-28 (PDYPPPPGGPPPPA) shows a compositional bias: pro residues. An ACT domain is found at 32-108 (RLLLRCHDRP…VADKFGIDYR (77 aa)). The active site involves D255.

It belongs to the PurU family.

The catalysed reaction is (6R)-10-formyltetrahydrofolate + H2O = (6S)-5,6,7,8-tetrahydrofolate + formate + H(+). It functions in the pathway purine metabolism; IMP biosynthesis via de novo pathway; formate from 10-formyl-5,6,7,8-tetrahydrofolate: step 1/1. In terms of biological role, catalyzes the hydrolysis of 10-formyltetrahydrofolate (formyl-FH4) to formate and tetrahydrofolate (FH4). The polypeptide is Formyltetrahydrofolate deformylase (Mycobacterium bovis (strain ATCC BAA-935 / AF2122/97)).